The sequence spans 88 residues: Insulin-related peptide 4 (88 aa).

Residues 1 to 19 (MKLTLIILLVVAYSWCSEA) form the signal peptide. Residues 20 to 45 (QNEARVFCGRVLSERLAALCWGPNSV) constitute a propeptide that is removed on maturation. Residue arginine 65 is modified to Arginine amide. A propeptide spanning residues 69–88 (GLATECCDKACTVEELLSYC) is cleaved from the precursor.

This sequence belongs to the insulin family. In terms of tissue distribution, DAGWWLTRGAARSLGGVR-amide: Expressed in corpora cardiaca (CC), corpora allata (CA), antennal lobe (AL) and gnathal ganglion (GNG) (at protein level). Expression in CC and CA detected in most animals, in AL and GNG in few animals (at protein level).

It is found in the secreted. The protein is Insulin-related peptide 4 of Agrotis ipsilon (Black cutworm moth).